A 799-amino-acid chain; its full sequence is High affinity nerve growth factor receptor (799 aa).

A signal peptide spans 1 to 33 (MLRGQRLGQLGWHRPAAGLGSLMTSLMLACASA). Topologically, residues 34 to 420 (ASCREVCCPV…VEKKDETPFG (387 aa)) are extracellular. Disulfide bonds link Cys36/Cys41 and Cys40/Cys50. N-linked (GlcNAc...) asparagine glycosylation occurs at Asn67. LRR repeat units follow at residues 90–113 (LGEL…AFRF) and 116–137 (RLSH…TVQG). Asn121, Asn190, Asn204, Asn255, Asn264, Asn320, Asn325, Asn341, Asn361, and Asn404 each carry an N-linked (GlcNAc...) asparagine glycan. One can recognise an LRRCT domain in the interval 148 to 219 (NPLHCSCALF…GDDVFLQCQV (72 aa)). Cys154 and Cys193 are oxidised to a cystine. Ig-like C2-type domains are found at residues 196-285 (PTVK…VSVS) and 205-368 (DSVE…LAAN). 2 disulfides stabilise this stretch: Cys217/Cys267 and Cys302/Cys348. Residues 421–441 (VSVAVGLAVSAALFLSALLLV) traverse the membrane as a helical segment. Residues 442–799 (LNKCGQRSKF…APPSYLDVLG (358 aa)) lie on the Cytoplasmic side of the membrane. The interaction with SQSTM1 stretch occupies residues 472-493 (MTLGGSSLSPTEGKGSGLQGHI). Tyr499 is modified (phosphotyrosine; by autocatalysis). Residues 513 to 784 (IILKWELGEG…LSMKDVHARL (272 aa)) form the Protein kinase domain. ATP is bound by residues 519–527 (LGEGAFGKV) and Lys547. Asp653 acts as the Proton acceptor in catalysis. 4 positions are modified to phosphotyrosine; by autocatalysis: Tyr679, Tyr683, Tyr684, and Tyr794.

It belongs to the protein kinase superfamily. Tyr protein kinase family. Insulin receptor subfamily. Exists in a dynamic equilibrium between monomeric (low affinity) and dimeric (high affinity) structures. Homodimerization is induced by binding of a NGF dimer. Found in a complex, at least composed of KIDINS220, MAGI2, NTRK1 and RAPGEF2; the complex is mainly formed at late endosomes in a nerve growth factor (NGF)-dependent manner. Interacts with RAPGEF2; the interaction is strengthened after NGF stimulation. Interacts with SQSTM1; bridges NTRK1 to NGFR. Forms a ternary complex with NGFR and KIDINS220; this complex is affected by the expression levels of KIDINS220 and an increase in KIDINS220 expression leads to a decreased association of NGFR and NTRK1. Interacts (phosphorylated upon activation by NGF) with SHC1; mediates SHC1 phosphorylation and activation. Interacts (phosphorylated upon activation by NGF) with PLCG1; mediates PLCG1 phosphorylation and activation. Interacts (phosphorylated) with SH2B1 and SH2B2. Interacts with GRB2. Interacts with PIK3R1. Interacts with FRS2. Interacts with SORT1; may regulate NTRK1 anterograde axonal transport. Interacts with SH2D1A; regulates NTRK1. Interacts with NRADD. Interacts with RAB7A. Interacts with PTPRS. Interacts with USP36; USP36 does not deubiquitinate NTRK1. Interacts with GGA3. Interacts with TSPAN1; this interaction promotes NTRK1 stability. In terms of processing, ligand-mediated autophosphorylation. Interaction with SQSTM1 is phosphotyrosine-dependent. Autophosphorylation at Tyr-499 mediates interaction and phosphorylation of SHC1. Post-translationally, N-glycosylated. Ubiquitinated. Undergoes polyubiquitination upon activation; regulated by NGFR. Ubiquitination by NEDD4L leads to degradation. Ubiquitination regulates the internalization of the receptor.

The protein localises to the cell membrane. Its subcellular location is the early endosome membrane. It is found in the late endosome membrane. The protein resides in the recycling endosome membrane. The enzyme catalyses L-tyrosyl-[protein] + ATP = O-phospho-L-tyrosyl-[protein] + ADP + H(+). The pro-survival signaling effect of NTRK1 in neurons requires its endocytosis into signaling early endosomes and its retrograde axonal transport. This is regulated by different proteins including CFL1, RAC1 and SORT1. NTF3 is unable to induce this signaling probably due to the lability of the NTF3-NTRK1 complex in endosomes. SH2D1A inhibits the autophosphorylation of the receptor, and alters the recruitment and activation of downstream effectors and signaling cascades. Regulated by NGFR. In terms of biological role, receptor tyrosine kinase involved in the development and the maturation of the central and peripheral nervous systems through regulation of proliferation, differentiation and survival of sympathetic and nervous neurons. High affinity receptor for NGF which is its primary ligand, it can also bind and be activated by NTF3/neurotrophin-3. However, NTF3 only supports axonal extension through NTRK1 but has no effect on neuron survival. Upon dimeric NGF ligand-binding, undergoes homodimerization, autophosphorylation and activation. Recruits, phosphorylates and/or activates several downstream effectors including SHC1, FRS2, SH2B1, SH2B2 and PLCG1 that regulate distinct overlapping signaling cascades driving cell survival and differentiation. Through SHC1 and FRS2 activates a GRB2-Ras-MAPK cascade that regulates cell differentiation and survival. Through PLCG1 controls NF-Kappa-B activation and the transcription of genes involved in cell survival. Through SHC1 and SH2B1 controls a Ras-PI3 kinase-AKT1 signaling cascade that is also regulating survival. In absence of ligand and activation, may promote cell death, making the survival of neurons dependent on trophic factors. This is High affinity nerve growth factor receptor (Ntrk1) from Mus musculus (Mouse).